A 344-amino-acid polypeptide reads, in one-letter code: MQLLLDLHPDQYPLEGFRQRQLLEWVFVQGVGTFEAMTNLPAQARADLASRFRLNPFREIETVRSADGSVKYLFTLQDGRQMEAVYMPYLDRKTICVSTMVGCPAKCAFCATGAMGFGRNLTPGEIVGQVLAVAGGEGLAPRELRNLVFMGMGEPLLNYENTMQAARILLHPQALGMSKRRVTLSTVGLPKGIRRLAAEDDLGIKLAISLHAPDEATRQRIIPTGHRNSIAEIMAAAREYQAVTGRRVTFEYSMLRGINDHLWQAEELADLLRGLVSHVNLIPMNPWDGSGFESSTEEQIQAFYDVLAARGVDVSVRRSRGKDAGAACGQLALKRPAAAVGASA.

Glu83 functions as the Proton acceptor in the catalytic mechanism. Residues 89–323 form the Radical SAM core domain; it reads YLDRKTICVS…VSVRRSRGKD (235 aa). The cysteines at positions 96 and 328 are disulfide-linked. Residues Cys103, Cys107, and Cys110 each contribute to the [4Fe-4S] cluster site. S-adenosyl-L-methionine is bound by residues 153–154, Ser185, 209–211, and Asn285; these read GE and SLH. Cys328 serves as the catalytic S-methylcysteine intermediate.

It belongs to the radical SAM superfamily. RlmN family. [4Fe-4S] cluster serves as cofactor.

The protein localises to the cytoplasm. It carries out the reaction adenosine(2503) in 23S rRNA + 2 reduced [2Fe-2S]-[ferredoxin] + 2 S-adenosyl-L-methionine = 2-methyladenosine(2503) in 23S rRNA + 5'-deoxyadenosine + L-methionine + 2 oxidized [2Fe-2S]-[ferredoxin] + S-adenosyl-L-homocysteine. It catalyses the reaction adenosine(37) in tRNA + 2 reduced [2Fe-2S]-[ferredoxin] + 2 S-adenosyl-L-methionine = 2-methyladenosine(37) in tRNA + 5'-deoxyadenosine + L-methionine + 2 oxidized [2Fe-2S]-[ferredoxin] + S-adenosyl-L-homocysteine. In terms of biological role, specifically methylates position 2 of adenine 2503 in 23S rRNA and position 2 of adenine 37 in tRNAs. The chain is Probable dual-specificity RNA methyltransferase RlmN from Deinococcus geothermalis (strain DSM 11300 / CIP 105573 / AG-3a).